The chain runs to 169 residues: Inorganic pyrophosphatase (169 aa).

An N-formylmethionine modification is found at Met1. Substrate-binding residues include Lys28, Arg42, and Tyr54. 3 residues coordinate Mg(2+): Asp64, Asp69, and Asp101. Tyr138 contributes to the substrate binding site.

The protein belongs to the PPase family. In terms of assembly, homohexamer. The cofactor is Mg(2+).

The protein localises to the cytoplasm. The enzyme catalyses diphosphate + H2O = 2 phosphate + H(+). Catalyzes the hydrolysis of inorganic pyrophosphate (PPi) forming two phosphate ions. This is Inorganic pyrophosphatase from Nostoc sp. (strain PCC 7120 / SAG 25.82 / UTEX 2576).